A 449-amino-acid polypeptide reads, in one-letter code: DNA-directed RNA polymerase subunit Rpo1C (449 aa).

Residues 1–68 (MQDVIKKIED…EGEELLKAVE (68 aa)) form a unknown region. The segment at 69-449 (DEYLRILKVR…TGSVSVIMKK (381 aa)) is DNA-directed RNA polymerase subunit Rpo1C.

This sequence belongs to the RNA polymerase beta' chain family. In terms of assembly, part of the RNA polymerase complex.

It is found in the cytoplasm. The enzyme catalyses RNA(n) + a ribonucleoside 5'-triphosphate = RNA(n+1) + diphosphate. Its function is as follows. DNA-dependent RNA polymerase (RNAP) catalyzes the transcription of DNA into RNA using the four ribonucleoside triphosphates as substrates. Forms part of the jaw domain. In Methanothermobacter thermautotrophicus (strain Winter) (Methanobacterium thermoautotrophicum), this protein is DNA-directed RNA polymerase subunit Rpo1C.